Consider the following 542-residue polypeptide: Chaperonin GroEL (542 aa).

Residues 29–32 (TLGP), Lys-50, 86–90 (DGTTT), Gly-415, and Asp-495 each bind ATP.

This sequence belongs to the chaperonin (HSP60) family. In terms of assembly, forms a cylinder of 14 subunits composed of two heptameric rings stacked back-to-back. Interacts with the co-chaperonin GroES.

The protein localises to the cytoplasm. The catalysed reaction is ATP + H2O + a folded polypeptide = ADP + phosphate + an unfolded polypeptide.. In terms of biological role, together with its co-chaperonin GroES, plays an essential role in assisting protein folding. The GroEL-GroES system forms a nano-cage that allows encapsulation of the non-native substrate proteins and provides a physical environment optimized to promote and accelerate protein folding. This chain is Chaperonin GroEL, found in Flavobacterium psychrophilum (strain ATCC 49511 / DSM 21280 / CIP 103535 / JIP02/86).